We begin with the raw amino-acid sequence, 273 residues long: Alkaline ceramidase 1 (273 aa).

Residues 1–36 (MHVPGTRAKMSSIFAYQSSEVDWCESNFQHSELVAE) lie on the Lumenal side of the membrane. Asp22, Trp23, Glu25, Asn27, and Glu36 together coordinate Ca(2+). The helical transmembrane segment at 37-57 (FYNTFSNVFFLIFGPLMMFLM) threads the bilayer. The Cytoplasmic segment spans residues 58-72 (HPYAQKRTRCFYGVS). 2 consecutive transmembrane segments (helical) span residues 73–93 (VLFMLIGLFSMYFHMTLSFLG) and 94–114 (QLLDEISILWLLASGYSVWLP). His86 provides a ligand contact to Zn(2+). The Cytoplasmic portion of the chain corresponds to 115 to 126 (RCYFPKFVKGNR). Residues 127–147 (FYFSCLVTITTIISTFLTFVK) traverse the membrane as a helical segment. The Lumenal portion of the chain corresponds to 148-149 (PT). Residues 150–167 (VNAYALNSIAIHILYIVR) form a helical membrane-spanning segment. Over 168 to 177 (TEYKKIRDDD) the chain is Cytoplasmic. A helical membrane pass occupies residues 178–198 (LRHLIAVSVVLWAAALTSWIS). Topologically, residues 199–215 (DRVLCSFWQRIHFYYLH) are lumenal. The Zn(2+) site is built by His215 and His219. Residues 216 to 236 (SIWHVLISITFPYGIVTMALV) traverse the membrane as a helical segment. Over 237–273 (DAKYEMPDKTLKVHYWPRDSWVIGLPYVEIQENDKNC) the chain is Cytoplasmic.

This sequence belongs to the alkaline ceramidase family. Zn(2+) is required as a cofactor. Highly expressed in skin. Weakly or not expressed in other tissues. Expressed by granular layer of interfollicular epidermis, sebaceous glands and infundibulum.

It localises to the endoplasmic reticulum membrane. It catalyses the reaction an N-acylsphing-4-enine + H2O = sphing-4-enine + a fatty acid. The enzyme catalyses N-tetracosanoyl-sphing-4-enine + H2O = tetracosanoate + sphing-4-enine. The catalysed reaction is an N-acylsphinganine + H2O = sphinganine + a fatty acid. It carries out the reaction N-(9Z-octadecenoyl)-sphing-4-enine + H2O = sphing-4-enine + (9Z)-octadecenoate. It catalyses the reaction N-(15Z-tetracosenoyl)-sphing-4-enine + H2O = (15Z)-tetracosenoate + sphing-4-enine. It functions in the pathway lipid metabolism; sphingolipid metabolism. With respect to regulation, inhibited by sphingosine. Inhibited by Mn(2+), Zn(2+), and Cu(2+) in a dose-dependent manner. Slightly activated by Ca(2+) in a dose-dependent manner. In terms of biological role, endoplasmic reticulum ceramidase that catalyzes the hydrolysis of ceramides into sphingosine and free fatty acids at alkaline pH. Ceramides, sphingosine, and its phosphorylated form sphingosine-1-phosphate are bioactive lipids that mediate cellular signaling pathways regulating several biological processes including cell proliferation, apoptosis and differentiation. Exhibits a strong substrate specificity towards the natural stereoisomer of ceramides with D-erythro-sphingosine as a backbone and has a higher activity towards very long-chain unsaturated fatty acids like the C24:1-ceramide. May also hydrolyze dihydroceramides to produce dihydrosphingosine. ACER1 is a skin-specific ceramidase that regulates the levels of ceramides, sphingosine and sphingosine-1-phosphate in the epidermis, mediates the calcium-induced differentiation of epidermal keratinocytes and more generally plays an important role in skin homeostasis. This chain is Alkaline ceramidase 1, found in Mus musculus (Mouse).